A 1870-amino-acid polypeptide reads, in one-letter code: Non-reducing polyketide synthase pkgA (1870 aa).

The interval 40–279 (IQDLIRRLHR…SRHSALPISG (240 aa)) is N-terminal acylcarrier protein transacylase domain (SAT). Positions 416–838 (DAKLAVVGMA…GGNTTLLLED (423 aa)) constitute a Ketosynthase family 3 (KS3) domain. Residues 453–492 (PPDRFDLDAHFDPSGEKENTTTKGSQSNRPLSRQAEQTDP) are disordered. The span at 455–472 (DRFDLDAHFDPSGEKENT) shows a compositional bias: basic and acidic residues. Residues 473-492 (TTKGSQSNRPLSRQAEQTDP) show a composition bias toward polar residues. Catalysis depends on for beta-ketoacyl synthase activity residues cysteine 577, histidine 712, and histidine 755. The interval 947–1282 (AFSGQGCLYH…QSFASLRRGD (336 aa)) is malonyl-CoA:ACP transacylase (MAT) domain. Positions 1004–1027 (RCPHRESTPSSDASHDSNTNRTST) are disordered. Residues 1011–1027 (TPSSDASHDSNTNRTST) are compositionally biased toward polar residues. The interval 1364-1704 (TSSVQQIIFE…PRALMPVLFP (341 aa)) is product template (PT) domain. The tract at residues 1368–1502 (QQIIFEEYDE…ATVCYEEAQD (135 aa)) is N-terminal hotdog fold. One can recognise a PKS/mFAS DH domain in the interval 1368-1700 (QQIIFEEYDE…FKAVPRALMP (333 aa)). Histidine 1400 (proton acceptor; for dehydratase activity) is an active-site residue. The segment at 1538-1700 (KGGPRVNNFF…FKAVPRALMP (163 aa)) is C-terminal hotdog fold. The active-site Proton donor; for dehydratase activity is aspartate 1602. Positions 1795–1870 (QSQNAQATAC…VQDLVTWLSK (76 aa)) constitute a Carrier domain. Serine 1832 carries the post-translational modification O-(pantetheine 4'-phosphoryl)serine.

Pantetheine 4'-phosphate is required as a cofactor.

It carries out the reaction holo-[ACP] + 6 malonyl-CoA + acetyl-CoA + 6 H(+) = 3,5,7,9,11,13-hexaoxotetradecanoyl-[ACP] + 6 CO2 + 7 CoA. The catalysed reaction is holo-[ACP] + 5 malonyl-CoA + acetyl-CoA + 5 H(+) = 3,5,7,9,11-pentaoxododecanoyl-[ACP] + 5 CO2 + 6 CoA. It participates in secondary metabolite biosynthesis. Functionally, non-reducing polyketide synthase; part of the pkg gene cluster that mediates the biosynthesis of dihydrocitreoisocoumarin and 6,8-dihydroxy-3-(2-oxopropyl)-isocoumarin. The non-reducing polyketide synthase pkgA performs the condensation of one acetyl-CoA starter unit with 6 and 5 malonyl-CoA units, respectively. As pkgA lacks a releasing domain, the thioesterase pkgB is necessary to break the thioester bond and release dihydrocitreoisocoumarin and 6,8-dihydroxy-3-(2-oxopropyl)-isocoumarin from pkgA. In Emericella nidulans (strain FGSC A4 / ATCC 38163 / CBS 112.46 / NRRL 194 / M139) (Aspergillus nidulans), this protein is Non-reducing polyketide synthase pkgA.